Here is a 780-residue protein sequence, read N- to C-terminus: ATP-dependent 6-phosphofructokinase, muscle type (780 aa).

N-acetylthreonine is present on T2. The N-terminal catalytic PFK domain 1 stretch occupies residues 2–390 (THEEHHAART…NWEVYKLLAH (389 aa)). ATP is bound by residues G25, 88 to 89 (RC), and 118 to 121 (GDGS). D119 contributes to the Mg(2+) binding site. A Phosphoserine modification is found at S133. Residues 164 to 166 (SID), R201, 208 to 210 (MGR), E264, R292, and 298 to 301 (HVQR) contribute to the substrate site. The active-site Proton acceptor is D166. A Phosphoserine modification is found at S377. The interval 391–401 (IRPPAPKSGSY) is interdomain linker. Positions 402–780 (TVAVMNVGAP…SRKRSGEATV (379 aa)) are C-terminal regulatory PFK domain 2. Beta-D-fructose 2,6-bisphosphate contacts are provided by residues R471 and 528–532 (TVSNN). An O-linked (GlcNAc) serine glycan is attached at S530. At K557 the chain carries N6-(2-hydroxyisobutyryl)lysine. Beta-D-fructose 2,6-bisphosphate contacts are provided by residues R566, 573–575 (MGG), E629, R655, and 661–664 (HMQQ). S667 carries the phosphoserine modification. R735 serves as a coordination point for beta-D-fructose 2,6-bisphosphate. The residue at position 775 (S775) is a Phosphoserine; by PKA.

Belongs to the phosphofructokinase type A (PFKA) family. ATP-dependent PFK group I subfamily. Eukaryotic two domain clade 'E' sub-subfamily. In terms of assembly, homo- and heterotetramers. Phosphofructokinase (PFK) enzyme functions as a tetramer composed of different combinations of 3 types of subunits, called PFKM (M), PFKL (L) and PFKP (P). The composition of the PFK tetramer differs according to the tissue type it is present in. The kinetic and regulatory properties of the tetrameric enzyme are dependent on the subunit composition, hence can vary across tissues. Interacts (via C-terminus) with HK1 (via N-terminal spermatogenic cell-specific region). Mg(2+) serves as cofactor. In terms of processing, glcNAcylation decreases enzyme activity.

The protein localises to the cytoplasm. The enzyme catalyses beta-D-fructose 6-phosphate + ATP = beta-D-fructose 1,6-bisphosphate + ADP + H(+). It functions in the pathway carbohydrate degradation; glycolysis; D-glyceraldehyde 3-phosphate and glycerone phosphate from D-glucose: step 3/4. Allosterically activated by ADP, AMP, or fructose 2,6-bisphosphate, and allosterically inhibited by ATP or citrate. Functionally, catalyzes the phosphorylation of D-fructose 6-phosphate to fructose 1,6-bisphosphate by ATP, the first committing step of glycolysis. This is ATP-dependent 6-phosphofructokinase, muscle type (PFKM) from Oryctolagus cuniculus (Rabbit).